Here is a 274-residue protein sequence, read N- to C-terminus: uncharacterized protein (274 aa).

The segment at 235–274 (ETFDTQQDPKKTPETDKNAAYKGKEKKGKKEERGPRSIMK) is disordered. The span at 241–274 (QDPKKTPETDKNAAYKGKEKKGKKEERGPRSIMK) shows a compositional bias: basic and acidic residues.

This is an uncharacterized protein from Treponema pallidum (strain Nichols).